We begin with the raw amino-acid sequence, 618 residues long: Proline--tRNA ligase (618 aa).

Belongs to the class-II aminoacyl-tRNA synthetase family. ProS type 1 subfamily. In terms of assembly, homodimer.

The protein localises to the cytoplasm. It carries out the reaction tRNA(Pro) + L-proline + ATP = L-prolyl-tRNA(Pro) + AMP + diphosphate. Catalyzes the attachment of proline to tRNA(Pro) in a two-step reaction: proline is first activated by ATP to form Pro-AMP and then transferred to the acceptor end of tRNA(Pro). As ProRS can inadvertently accommodate and process non-cognate amino acids such as alanine and cysteine, to avoid such errors it has two additional distinct editing activities against alanine. One activity is designated as 'pretransfer' editing and involves the tRNA(Pro)-independent hydrolysis of activated Ala-AMP. The other activity is designated 'posttransfer' editing and involves deacylation of mischarged Ala-tRNA(Pro). The misacylated Cys-tRNA(Pro) is not edited by ProRS. In Streptococcus equi subsp. equi (strain 4047), this protein is Proline--tRNA ligase.